A 122-amino-acid polypeptide reads, in one-letter code: High-potential iron-sulfur protein (122 aa).

The signal sequence occupies residues 1–37; it reads MSDKPISKSRRDAVKVMLGTAAAIPMINLVGFGTARA. Residues Cys80, Cys83, Cys100, and Cys114 each coordinate [4Fe-4S] cluster.

The protein belongs to the high-potential iron-sulfur protein (HiPIP) family. In terms of assembly, homodimer.

The protein resides in the periplasm. Functionally, specific class of high-redox-potential 4Fe-4S ferredoxins. Functions in anaerobic electron transport in most purple and in some other photosynthetic bacteria and in at least one genus (Paracoccus) of halophilic, denitrifying bacteria. This chain is High-potential iron-sulfur protein (hip), found in Allochromatium vinosum (strain ATCC 17899 / DSM 180 / NBRC 103801 / NCIMB 10441 / D) (Chromatium vinosum).